The primary structure comprises 270 residues: MTRRNNPELNDEREPIDKIKASIDLKKKTIRRNKRKRRLIKMLQFLIVIGVLIGIYYFDKSDASRVHNVRVNGNVILSDAEIKDALNIHENQRIYLTFKPFINHKGKKVKGIDNIDANVYYRQGIINLNVTEKKAVGYTLEPSIRIYFEDGFYKELETLNPSVIERLPLLVGFTEESISESLLSALATIDDGSMASVSEIHFEPTKVEPDYMRIVMNNDYFVFTNVETLPQLNKYATIISGADSNARCIEFIEYGPTEETQSAVVKACGS.

Residues 1 to 38 (MTRRNNPELNDEREPIDKIKASIDLKKKTIRRNKRKRR) lie on the Cytoplasmic side of the membrane. The helical transmembrane segment at 39-59 (LIKMLQFLIVIGVLIGIYYFD) threads the bilayer. The Extracellular segment spans residues 60-270 (KSDASRVHNV…QSAVVKACGS (211 aa)). A POTRA domain is found at 64-135 (SRVHNVRVNG…INLNVTEKKA (72 aa)).

Belongs to the FtsQ/DivIB family. DivIB subfamily.

The protein localises to the cell membrane. Cell division protein that may be involved in stabilizing or promoting the assembly of the division complex. In Erysipelothrix rhusiopathiae (strain Fujisawa), this protein is Cell division protein DivIB.